Consider the following 339-residue polypeptide: Replication factor C subunit 2 (339 aa).

An ATP-binding site is contributed by 48 to 55 (YGPPGTGK).

Belongs to the activator 1 small subunits family. As to quaternary structure, heterotetramer of subunits RFC2, RFC3, RFC4 and RFC5 that can form a complex with RFC1. In terms of tissue distribution, expressed in roots, leaves, shoot apical meristem (SAM), flag leaves and panicles.

It localises to the nucleus. Its function is as follows. May be involved in DNA replication and thus regulate cell proliferation. In Oryza sativa subsp. japonica (Rice), this protein is Replication factor C subunit 2 (RFC2).